A 90-amino-acid polypeptide reads, in one-letter code: Evasin P458 (90 aa).

Residues 1-24 form the signal peptide; sequence MEVKTFAFLQIAVLIAFSLHSASA. 3 disulfides stabilise this stretch: cysteine 44-cysteine 63, cysteine 48-cysteine 65, and cysteine 59-cysteine 76. N-linked (GlcNAc...) asparagine glycosylation occurs at asparagine 47.

It is found in the secreted. In terms of biological role, salivary chemokine-binding protein which binds to host chemokines CXCL1, CXCL2, CXCL3, CXCL5, CXCL6 and CXCL13. The chain is Evasin P458 from Ixodes ricinus (Common tick).